Here is a 293-residue protein sequence, read N- to C-terminus: Bifunctional protein FolD (293 aa).

NADP(+)-binding positions include 165–167 (GRS), S190, and I231.

This sequence belongs to the tetrahydrofolate dehydrogenase/cyclohydrolase family. As to quaternary structure, homodimer.

The catalysed reaction is (6R)-5,10-methylene-5,6,7,8-tetrahydrofolate + NADP(+) = (6R)-5,10-methenyltetrahydrofolate + NADPH. It carries out the reaction (6R)-5,10-methenyltetrahydrofolate + H2O = (6R)-10-formyltetrahydrofolate + H(+). The protein operates within one-carbon metabolism; tetrahydrofolate interconversion. Functionally, catalyzes the oxidation of 5,10-methylenetetrahydrofolate to 5,10-methenyltetrahydrofolate and then the hydrolysis of 5,10-methenyltetrahydrofolate to 10-formyltetrahydrofolate. This is Bifunctional protein FolD from Synechococcus sp. (strain CC9902).